Reading from the N-terminus, the 431-residue chain is Adenylosuccinate synthetase (431 aa).

Residues 12 to 18 (GDEGKGK) and 40 to 42 (GHT) contribute to the GTP site. The active-site Proton acceptor is the Asp13. Residues Asp13 and Gly40 each coordinate Mg(2+). IMP is bound by residues 13 to 16 (DEGK), 38 to 41 (NAGH), Thr131, Arg145, Gln225, Thr240, and Arg304. His41 acts as the Proton donor in catalysis. 300–306 (TVTGRKR) serves as a coordination point for substrate. GTP is bound by residues Arg306, 332–334 (KLD), and 414–416 (STS).

It belongs to the adenylosuccinate synthetase family. Homodimer. It depends on Mg(2+) as a cofactor.

The protein localises to the cytoplasm. It carries out the reaction IMP + L-aspartate + GTP = N(6)-(1,2-dicarboxyethyl)-AMP + GDP + phosphate + 2 H(+). The protein operates within purine metabolism; AMP biosynthesis via de novo pathway; AMP from IMP: step 1/2. Plays an important role in the de novo pathway of purine nucleotide biosynthesis. Catalyzes the first committed step in the biosynthesis of AMP from IMP. The chain is Adenylosuccinate synthetase from Roseobacter denitrificans (strain ATCC 33942 / OCh 114) (Erythrobacter sp. (strain OCh 114)).